A 351-amino-acid chain; its full sequence is Holliday junction branch migration complex subunit RuvB (351 aa).

A large ATPase domain (RuvB-L) region spans residues 4 to 199; sequence DNPQFNQWYE…FGIINSLQYY (196 aa). Residues Leu-38, Arg-39, Gly-80, Lys-83, Thr-84, Thr-85, 146–148, Arg-189, Tyr-199, and Arg-236 each bind ATP; that span reads EDY. Mg(2+) is bound at residue Thr-84. The segment at 200 to 270 is small ATPAse domain (RuvB-S); it reads TPEELQQIVV…IVTIGLDKLR (71 aa). The tract at residues 273–351 is head domain (RuvB-H); that stretch reads NRGLDETDHK…HLGHAYQRKL (79 aa). Arg-328 and Arg-333 together coordinate DNA.

Belongs to the RuvB family. As to quaternary structure, homohexamer. Forms an RuvA(8)-RuvB(12)-Holliday junction (HJ) complex. HJ DNA is sandwiched between 2 RuvA tetramers; dsDNA enters through RuvA and exits via RuvB. An RuvB hexamer assembles on each DNA strand where it exits the tetramer. Each RuvB hexamer is contacted by two RuvA subunits (via domain III) on 2 adjacent RuvB subunits; this complex drives branch migration. In the full resolvosome a probable DNA-RuvA(4)-RuvB(12)-RuvC(2) complex forms which resolves the HJ.

The protein localises to the cytoplasm. The catalysed reaction is ATP + H2O = ADP + phosphate + H(+). In terms of biological role, the RuvA-RuvB-RuvC complex processes Holliday junction (HJ) DNA during genetic recombination and DNA repair, while the RuvA-RuvB complex plays an important role in the rescue of blocked DNA replication forks via replication fork reversal (RFR). RuvA specifically binds to HJ cruciform DNA, conferring on it an open structure. The RuvB hexamer acts as an ATP-dependent pump, pulling dsDNA into and through the RuvAB complex. RuvB forms 2 homohexamers on either side of HJ DNA bound by 1 or 2 RuvA tetramers; 4 subunits per hexamer contact DNA at a time. Coordinated motions by a converter formed by DNA-disengaged RuvB subunits stimulates ATP hydrolysis and nucleotide exchange. Immobilization of the converter enables RuvB to convert the ATP-contained energy into a lever motion, pulling 2 nucleotides of DNA out of the RuvA tetramer per ATP hydrolyzed, thus driving DNA branch migration. The RuvB motors rotate together with the DNA substrate, which together with the progressing nucleotide cycle form the mechanistic basis for DNA recombination by continuous HJ branch migration. Branch migration allows RuvC to scan DNA until it finds its consensus sequence, where it cleaves and resolves cruciform DNA. The chain is Holliday junction branch migration complex subunit RuvB from Leuconostoc mesenteroides subsp. mesenteroides (strain ATCC 8293 / DSM 20343 / BCRC 11652 / CCM 1803 / JCM 6124 / NCDO 523 / NBRC 100496 / NCIMB 8023 / NCTC 12954 / NRRL B-1118 / 37Y).